A 626-amino-acid polypeptide reads, in one-letter code: Serine/threonine-protein kinase ATG1a (626 aa).

Residues 10 to 268 form the Protein kinase domain; the sequence is YALGPRIGSG…FREFFNHMFL (259 aa). Residues 16–24 and K39 contribute to the ATP site; that span reads IGSGSFAVV. Residue D132 is the Proton acceptor of the active site. Residues 288–308 are compositionally biased toward polar residues; that stretch reads KSLLPSAQPSTSTNRFKSSAE. The interval 288 to 347 is disordered; sequence KSLLPSAQPSTSTNRFKSSAENVHKHGSSSSASNSQISMPHTSFEKTRKDTEGQCSSNQS. Residues 315–325 show a composition bias toward low complexity; sequence SSSSASNSQIS. Positions 330–339 are enriched in basic and acidic residues; it reads SFEKTRKDTE. Positions 360–363 match the AIM (Atg8-family-interacting motif) motif; sequence YVLV.

It belongs to the protein kinase superfamily. Ser/Thr protein kinase family. Interacts with ATG13A. Interacts with ATG8E. Binds to ATG8E on autophagic vesicles. In terms of processing, phosphorylated during nutrient starvation. Dephosphorylated in nutrient-rich conditions.

It localises to the cytoplasmic vesicle. The protein localises to the autophagosome. In terms of biological role, serine/threonine protein kinase involved in autophagy in a nutritional condition-dependent manner. The ATG1-ATG13 protein kinase complex regulates downstream events required for autophagosome enclosure and/or vacuolar delivery. Becomes a target of autophagy under nutrient starvation. Connects autophagy to plant nutritional status. The chain is Serine/threonine-protein kinase ATG1a from Arabidopsis thaliana (Mouse-ear cress).